A 575-amino-acid chain; its full sequence is Alpha-(1,6)-fucosyltransferase (575 aa).

At 1–9 (MRPWTGSWR) the chain is on the cytoplasmic side. Residues 10–30 (WIMLILFAWGTLLFYIGGHLV) form a helical; Signal-anchor for type II membrane protein membrane-spanning segment. Topologically, residues 31 to 575 (RDNDHPDHSS…KYPTYPEAEK (545 aa)) are lumenal. 3 disulfide bridges follow: Cys204-Cys266, Cys212-Cys230, and Cys218-Cys222. Positions 206-493 (KAKKLVCNIN…PDASANFHSL (288 aa)) constitute a GT23 domain. At Ser278 the chain carries Phosphoserine. The SH3-binding signature appears at 299 to 305 (PRPPYLP). An important for donor substrate binding region spans residues 365–366 (RR). A disulfide bond links Cys465 and Cys472. One can recognise an SH3 domain in the interval 502–563 (QNAHNQIAIY…PSYKVREKIE (62 aa)).

It belongs to the glycosyltransferase 23 family. Tyrosine phosphorylated by PKDCC/VLK.

The protein localises to the golgi apparatus. Its subcellular location is the golgi stack membrane. It carries out the reaction N(4)-{beta-D-GlcNAc-(1-&gt;2)-alpha-D-Man-(1-&gt;3)-[beta-D-GlcNAc-(1-&gt;2)-alpha-D-Man-(1-&gt;6)]-beta-D-Man-(1-&gt;4)-beta-D-GlcNAc-(1-&gt;4)-beta-D-GlcNAc}-L-asparaginyl-[protein] + GDP-beta-L-fucose = an N(4)-{beta-D-GlcNAc-(1-&gt;2)-alpha-D-Man-(1-&gt;3)-[beta-D-GlcNAc-(1-&gt;2)-alpha-D-Man-(1-&gt;6)]-beta-D-Man-(1-&gt;4)-beta-D-GlcNAc-(1-&gt;4)-[alpha-L-Fuc-(1-&gt;6)]-beta-D-GlcNAc}-L-asparaginyl-[protein] + GDP + H(+). It participates in protein modification; protein glycosylation. Functionally, catalyzes the addition of fucose in alpha 1-6 linkage to the first GlcNAc residue, next to the peptide chains in N-glycans. This is Alpha-(1,6)-fucosyltransferase (FUT8) from Homo sapiens (Human).